We begin with the raw amino-acid sequence, 262 residues long: Protein BREAKING OF ASYMMETRY IN THE STOMATAL LINEAGE (262 aa).

Disordered regions lie at residues 32–107 and 129–222; these read DEDG…QPPV and KEGK…GRGS. A compositionally biased stretch (low complexity) spans 37–47; it reads NNNGNTTNNNN. 2 short sequence motifs (nuclear localization signal) span residues 50 to 57 and 61 to 68; these read FKRIKRKI and KKKRSERK. The segment covering 51–66 has biased composition (basic residues); the sequence is KRIKRKIKSTKKKRSE. Ser-72, Ser-85, Ser-86, and Ser-87 each carry phosphoserine; by ASK7. Residues 84 to 95 show a composition bias toward low complexity; it reads RSSSVSPTTSGS. Phosphoserine; by ASK7 and MPK6 is present on Ser-89. Thr-91 is subject to Phosphothreonine; by ASK7. A compositionally biased stretch (basic and acidic residues) spans 129 to 146; sequence KEGKQEKKETESSSEKSP. 2 positions are modified to phosphoserine; by MPK6: Ser-145 and Ser-168. The span at 179 to 189 shows a compositional bias: polar residues; sequence NDNTSCQGTKD. Residues 190–200 are compositionally biased toward basic and acidic residues; it reads VSSDVTERTKE. Residues 222–262 form a required for polarization at the cell cortex region; the sequence is SFAFPILGVEWMGSPAKMPESDDLSPKKQKPVALGFQCCRF. The FxFP, required for cortical polarity formation motif lies at 223-226; sequence FAFP. Residues Ser-235 and Ser-246 each carry the phosphoserine; by MPK6 modification.

Component of a complex made of POLAR, BASL, ASK7/BIN2 and ASK3/SK12. Interacts with POLAR, ASK7/BIN2 and ASK3/SK12. Binds to YDA when phosphorylated. Interacts with MPK6, MPK3 and MKK5. Cortical localization of BASL requires phosphorylation mediated by MPK3 and MPK6. Phosphorylation promotes YDA binding. Phosphorylation status modulates subcellular mobility. As to expression, mostly expressed in stomatal lineage cells including asymmetrically dividing meristemoid mother cells (MMCs) and meristemoids, and, at lower levels, in their sisters. Also present in vasculature. Expressed at low levels in the epidermal pavement cells.

The protein localises to the cytoplasm. The protein resides in the nucleus. It localises to the cell cortex. Its subcellular location is the cell membrane. Its function is as follows. Regulates asymmetric cell division (ACD), especially in stomatal-lineage cells, probably by modulating accumulation and subcellular polarization of POLAR and SPCH. Mediates an attenuation of MAPK signaling upon polarization of POLAR and ASK7/BIN2 in stomatal lineage ground cells (SLGCs) undergoing ACD, and relieves BIN2 inhibition of SPCH in the nucleus. When phosphorylated, functions as a scaffold and recruits the MAPKKK YODA, MPK3 and MPK6 to spatially reorganize the MAPK signaling pathway at the cortex of cells undergoing ACD. Cortical polarization leads to elevated nuclear MPK6 signaling and lowered SPCH abundance in one of the two daughter cells, thus differentiating the two daughter cells after ACD. This is Protein BREAKING OF ASYMMETRY IN THE STOMATAL LINEAGE from Arabidopsis thaliana (Mouse-ear cress).